Consider the following 355-residue polypeptide: Probable dual-specificity RNA methyltransferase RlmN 1 (355 aa).

Glu-91 serves as the catalytic Proton acceptor. Residues 99–336 enclose the Radical SAM core domain; sequence RADRAAGCLS…THLRRSRGPD (238 aa). The cysteines at positions 106 and 341 are disulfide-linked. Cys-113, Cys-117, and Cys-120 together coordinate [4Fe-4S] cluster. S-adenosyl-L-methionine contacts are provided by residues 163–164, Ser-195, 218–220, and Asn-294; these read GE and SLH. Catalysis depends on Cys-341, which acts as the S-methylcysteine intermediate.

Belongs to the radical SAM superfamily. RlmN family. It depends on [4Fe-4S] cluster as a cofactor.

The protein resides in the cytoplasm. The enzyme catalyses adenosine(2503) in 23S rRNA + 2 reduced [2Fe-2S]-[ferredoxin] + 2 S-adenosyl-L-methionine = 2-methyladenosine(2503) in 23S rRNA + 5'-deoxyadenosine + L-methionine + 2 oxidized [2Fe-2S]-[ferredoxin] + S-adenosyl-L-homocysteine. It carries out the reaction adenosine(37) in tRNA + 2 reduced [2Fe-2S]-[ferredoxin] + 2 S-adenosyl-L-methionine = 2-methyladenosine(37) in tRNA + 5'-deoxyadenosine + L-methionine + 2 oxidized [2Fe-2S]-[ferredoxin] + S-adenosyl-L-homocysteine. In terms of biological role, specifically methylates position 2 of adenine 2503 in 23S rRNA and position 2 of adenine 37 in tRNAs. The protein is Probable dual-specificity RNA methyltransferase RlmN 1 of Opitutus terrae (strain DSM 11246 / JCM 15787 / PB90-1).